The sequence spans 123 residues: Protein Wnt-7a (123 aa).

Ser1 is lipidated: O-palmitoleoyl serine; by PORCN. The disordered linker stretch occupies residues 33 to 61 (VEPVRTHRNKRPVFLKIKKPLSYRKPMVT). A disulfide bridge links Cys89 with Cys104. Residues Asn90 and Asn96 are each glycosylated (N-linked (GlcNAc...) asparagine).

Belongs to the Wnt family. Forms a soluble 1:1 complex with AFM; this prevents oligomerization and is required for prolonged biological activity. The complex with AFM may represent the physiological form in body fluids. Interacts with FZD5. Interacts with PORCN. Palmitoleoylation is required for efficient binding to frizzled receptors. Depalmitoleoylation leads to Wnt signaling pathway inhibition.

The protein resides in the secreted. The protein localises to the extracellular space. It is found in the extracellular matrix. Ligand for members of the frizzled family of seven transmembrane receptors that functions in the canonical Wnt/beta-catenin signaling pathway. Plays an important role in embryonic development, including dorsal versus ventral patterning during limb development, skeleton development and urogenital tract development. Required for central nervous system (CNS) angiogenesis and blood-brain barrier regulation. This is Protein Wnt-7a (WNT-7A) from Alopias vulpinus (Common thresher shark).